Here is a 334-residue protein sequence, read N- to C-terminus: Phosphate acyltransferase (334 aa).

This sequence belongs to the PlsX family. As to quaternary structure, homodimer. Probably interacts with PlsY.

It is found in the cytoplasm. It carries out the reaction a fatty acyl-[ACP] + phosphate = an acyl phosphate + holo-[ACP]. The protein operates within lipid metabolism; phospholipid metabolism. Functionally, catalyzes the reversible formation of acyl-phosphate (acyl-PO(4)) from acyl-[acyl-carrier-protein] (acyl-ACP). This enzyme utilizes acyl-ACP as fatty acyl donor, but not acyl-CoA. This chain is Phosphate acyltransferase, found in Streptococcus thermophilus (strain CNRZ 1066).